The following is a 45-amino-acid chain: Photosystem II reaction center protein K (45 aa).

Positions 1–8 (MLMSLFLA) are excised as a propeptide. Residues 23–43 (ILPIIPLFFLLLAFVWQAAIG) form a helical membrane-spanning segment.

Belongs to the PsbK family. In terms of assembly, PSII is composed of 1 copy each of membrane proteins PsbA, PsbB, PsbC, PsbD, PsbE, PsbF, PsbH, PsbI, PsbJ, PsbK, PsbL, PsbM, PsbT, PsbX, PsbY, PsbZ, Psb30/Ycf12, at least 3 peripheral proteins of the oxygen-evolving complex and a large number of cofactors. It forms dimeric complexes.

Its subcellular location is the plastid. It is found in the cyanelle thylakoid membrane. Its function is as follows. One of the components of the core complex of photosystem II (PSII). PSII is a light-driven water:plastoquinone oxidoreductase that uses light energy to abstract electrons from H(2)O, generating O(2) and a proton gradient subsequently used for ATP formation. It consists of a core antenna complex that captures photons, and an electron transfer chain that converts photonic excitation into a charge separation. In Cyanophora paradoxa, this protein is Photosystem II reaction center protein K.